A 92-amino-acid polypeptide reads, in one-letter code: Conotoxin Mr15.2 (92 aa).

An N-terminal signal peptide occupies residues 1–20 (MSTLKMMLLILLLLLPMATF). Positions 21–53 (DSDGQAIPGGGIPSAVNSRVGGDEKSGRSLEKR) are excised as a propeptide. Positions 30-49 (GGIPSAVNSRVGGDEKSGRS) are disordered.

The protein belongs to the conotoxin N superfamily. In terms of processing, contains 4 disulfide bonds. Expressed by the venom duct.

The protein resides in the secreted. The chain is Conotoxin Mr15.2 from Conus marmoreus (Marble cone).